A 444-amino-acid chain; its full sequence is ATP-dependent 6-phosphofructokinase 2 (444 aa).

At S55 the chain carries Phosphoserine. ATP is bound by residues G86, 149 to 150, and 174 to 177; these read RG and GDGT. D175 lines the Mg(2+) pocket. Residues 203–205, 248–250, E304, and 362–365 contribute to the substrate site; these read TVD, MGR, and YMIR. Catalysis depends on D205, which acts as the Proton acceptor.

It belongs to the phosphofructokinase type A (PFKA) family. PPi-dependent PFK group II subfamily. Atypical ATP-dependent clade 'X' sub-subfamily. Homotetramer. The cofactor is Mg(2+). Mostly expressed in roots and stems.

The protein resides in the cytoplasm. It catalyses the reaction beta-D-fructose 6-phosphate + ATP = beta-D-fructose 1,6-bisphosphate + ADP + H(+). Its pathway is carbohydrate degradation; glycolysis; D-glyceraldehyde 3-phosphate and glycerone phosphate from D-glucose: step 3/4. Allosterically activated by AMP. Catalyzes the phosphorylation of D-fructose 6-phosphate to fructose 1,6-bisphosphate by ATP, the first committing step of glycolysis. The chain is ATP-dependent 6-phosphofructokinase 2 from Arabidopsis thaliana (Mouse-ear cress).